The sequence spans 469 residues: 2-amino-4-ketopentanoate thiolase beta subunit (469 aa).

An N6-(pyridoxal phosphate)lysine modification is found at K102. Residues N128 and 238 to 242 contribute to the pyridoxal 5'-phosphate site; that span reads AGGGN.

The protein belongs to the threonine synthase family. As to quaternary structure, heterodimer with OrtA. The cofactor is pyridoxal 5'-phosphate.

It catalyses the reaction D-alanine + acetyl-CoA = (2R)-2-amino-4-oxopentanoate + CoA. Its activity is regulated as follows. Completely inhibited by p-chloromercuribenzoate (p-ClHgBzO) and acetyl-CoA, and partially inhibited by N-ethylmaleimide. In terms of biological role, involved in the ornithine fermentation pathway. Catalyzes the thiolytic cleavage of 2-amino-4-ketopentanoate (AKP) with coenzyme A (CoA) to form acetyl-CoA and alanine. It is strictly specific for AKP. The protein is 2-amino-4-ketopentanoate thiolase beta subunit of Acetoanaerobium sticklandii (strain ATCC 12662 / DSM 519 / JCM 1433 / CCUG 9281 / NCIMB 10654 / HF) (Clostridium sticklandii).